We begin with the raw amino-acid sequence, 176 residues long: B9 domain-containing protein 2 (176 aa).

The 117-residue stretch at 2–118 (AEVHIIGQII…LSPTWRPLGT (117 aa)) folds into the C2 B9-type domain.

It belongs to the B9D family. As to quaternary structure, part of the tectonic-like complex (also named B9 complex).

Its subcellular location is the cytoplasm. It is found in the cytoskeleton. It localises to the cilium basal body. The protein localises to the cilium axoneme. Its function is as follows. Component of the tectonic-like complex, a complex localized at the transition zone of primary cilia and acting as a barrier that prevents diffusion of transmembrane proteins between the cilia and plasma membranes. The chain is B9 domain-containing protein 2 (b9d2) from Xenopus laevis (African clawed frog).